The chain runs to 136 residues: Large ribosomal subunit protein uL16 (136 aa).

The protein belongs to the universal ribosomal protein uL16 family. Part of the 50S ribosomal subunit.

Functionally, binds 23S rRNA and is also seen to make contacts with the A and possibly P site tRNAs. This Pasteurella multocida (strain Pm70) protein is Large ribosomal subunit protein uL16.